Reading from the N-terminus, the 617-residue chain is 1-deoxy-D-xylulose-5-phosphate synthase (617 aa).

Residues histidine 80 and 121–123 (GHS) contribute to the thiamine diphosphate site. Aspartate 152 provides a ligand contact to Mg(2+). Thiamine diphosphate contacts are provided by residues 153 to 154 (GA), asparagine 181, tyrosine 277, and glutamate 360. Asparagine 181 lines the Mg(2+) pocket.

This sequence belongs to the transketolase family. DXPS subfamily. In terms of assembly, homodimer. Mg(2+) is required as a cofactor. Requires thiamine diphosphate as cofactor.

It carries out the reaction D-glyceraldehyde 3-phosphate + pyruvate + H(+) = 1-deoxy-D-xylulose 5-phosphate + CO2. The protein operates within metabolic intermediate biosynthesis; 1-deoxy-D-xylulose 5-phosphate biosynthesis; 1-deoxy-D-xylulose 5-phosphate from D-glyceraldehyde 3-phosphate and pyruvate: step 1/1. Functionally, catalyzes the acyloin condensation reaction between C atoms 2 and 3 of pyruvate and glyceraldehyde 3-phosphate to yield 1-deoxy-D-xylulose-5-phosphate (DXP). The sequence is that of 1-deoxy-D-xylulose-5-phosphate synthase from Blochmanniella floridana.